Here is a 560-residue protein sequence, read N- to C-terminus: N-acetylglucosamine-6-sulfatase (560 aa).

Residues 1-25 are disordered; it reads MRLLSLAPDRPRRGGPRHLTSGSPA. A signal peptide spans 1 to 48; it reads MRLLSLAPDRPRRGGPRHLTSGSPALPPPPPLLLLLLLLGGCLGVSGA. Asp63, Asp64, and Cys99 together coordinate Ca(2+). Residue Cys99 is the Nucleophile of the active site. Residue Cys99 is modified to 3-oxoalanine (Cys). Residues Asn119, Asn125, Asn191, Asn206, Asn218, Asn287, and Asn325 are each glycosylated (N-linked (GlcNAc...) asparagine). Ca(2+) is bound by residues Asp334 and Asn335. N-linked (GlcNAc...) asparagine glycosylation is found at Asn370, Asn395, Asn413, Asn430, Asn457, and Asn488. A Phosphoserine modification is found at Ser549.

It belongs to the sulfatase family. Ca(2+) serves as cofactor. The conversion to 3-oxoalanine (also known as C-formylglycine, FGly), of a serine or cysteine residue in prokaryotes and of a cysteine residue in eukaryotes, is critical for catalytic activity.

It is found in the lysosome. The catalysed reaction is Hydrolysis of the 6-sulfate groups of the N-acetyl-D-glucosamine 6-sulfate units of heparan sulfate and keratan sulfate.. Functionally, hydrolyzes 6-sulfate groups in N-acetyl-d-glucosaminide units of heparin sulfate and keratan sulfate. The chain is N-acetylglucosamine-6-sulfatase (GNS) from Bos taurus (Bovine).